The primary structure comprises 938 residues: ATP-dependent RNA helicase DDX42 (938 aa).

Residues 1–18 are compositionally biased toward gly residues; it reads MNWNKGGPGTKRGFGFGG. The segment at 1–114 is disordered; the sequence is MNWNKGGPGT…KPVDSDSDDD (114 aa). Residue lysine 5 is modified to N6-acetyllysine. Arginine 12 carries the omega-N-methylarginine modification. The span at 35–52 shows a compositional bias: low complexity; sequence SHSAFGATSSSSGFGKSA. Residue serine 58 is modified to Phosphoserine. Positions 70–84 are enriched in acidic residues; sequence DEENAYFEDEEEDSS. 4 positions are modified to phosphoserine: serine 96, serine 104, serine 109, and serine 111. Residues 116–157 are a coiled coil; sequence LEAFMAEVEDQAARDMKRLEEKDKERKNVKGIRDDIEEEDDQ. The interval 182 to 203 is disordered; it reads EYDSDGNPIAPTKKIIDPLPPI. Serine 185 bears the Phosphoserine mark. The Q motif signature appears at 253-281; it reads SSFAHFGFDEQLMHQIRKSEYTQPTPIQC. Residues 284–459 enclose the Helicase ATP-binding domain; the sequence is VPVALSGRDM…RDILIDPIRV (176 aa). ATP is bound at residue 297–304; it reads AKTGSGKT. Positions 407-410 match the DEAD box motif; it reads DEAD. The region spanning 487–632 is the Helicase C-terminal domain; the sequence is WLTRRLVEFT…HVSKELLDLA (146 aa). 2 stretches are compositionally biased toward polar residues: residues 737 to 757 and 786 to 798; these read LNSVPTNSAQQGHNSPDSPVT and GVNNTASGNNSRE. The disordered stretch occupies residues 737-938; it reads LNSVPTNSAQ…PKRKKSRWDS (202 aa). The interval 738–833 is necessary for interaction with TP53BP2; sequence NSVPTNSAQQ…TGNRHSDSPR (96 aa). A Phosphoserine modification is found at serine 754. Positions 820 to 920 are enriched in basic and acidic residues; the sequence is SHGETGNRHS…KVDSKTDKTA (101 aa). Lysine 899 is covalently cross-linked (Glycyl lysine isopeptide (Lys-Gly) (interchain with G-Cter in SUMO2)).

It belongs to the DEAD box helicase family. DDX42 subfamily. Transient component of the SF3B subcomplex of the 17S U2 SnRNP complex. Interacts (via the C-terminus) with TP53BP2; the interaction is not inhibitied by TP53BP2 ubiquitination and is independent of p53/TP53. As to expression, expressed in several cell lines (at protein level). Expressed in liver, lung, tonsil, thymus, muscle and pancreatic islets.

Its subcellular location is the cytoplasm. It localises to the nucleus. The protein localises to the cajal body. The protein resides in the nucleus speckle. The enzyme catalyses ATP + H2O = ADP + phosphate + H(+). Functionally, ATP-dependent RNA helicase that binds to partially double-stranded RNAs (dsRNAs) in order to unwind RNA secondary structures. Unwinding is promoted in the presence of single-strand binding proteins. Also mediates RNA duplex formation thereby displacing the single-strand RNA binding protein. ATP and ADP modulate its activity: ATP binding and hydrolysis by DDX42 triggers RNA strand separation, whereas the ADP-bound form of the protein triggers annealing of complementary RNA strands. Required for assembly of the 17S U2 SnRNP complex of the spliceosome, a large ribonucleoprotein complex that removes introns from transcribed pre-mRNAs: DDX42 associates transiently with the SF3B subcomplex of the 17S U2 SnRNP complex and is released after fulfilling its role in the assembly of 17S U2 SnRNP. Involved in the survival of cells by interacting with TP53BP2 and thereby counteracting the apoptosis-stimulating activity of TP53BP2. Relocalizes TP53BP2 to the cytoplasm. The protein is ATP-dependent RNA helicase DDX42 of Homo sapiens (Human).